Here is a 193-residue protein sequence, read N- to C-terminus: Acyl carrier protein phosphodiesterase (193 aa).

This sequence belongs to the AcpH family.

The enzyme catalyses holo-[ACP] + H2O = apo-[ACP] + (R)-4'-phosphopantetheine + H(+). Its function is as follows. Converts holo-ACP to apo-ACP by hydrolytic cleavage of the phosphopantetheine prosthetic group from ACP. This is Acyl carrier protein phosphodiesterase from Serratia proteamaculans (strain 568).